The sequence spans 218 residues: MSALRITTASAARMLRTSNAMMPSVMGAAQRRALSDSAEPARVPSVESARVPEKLAKEDSPLATPKRNSPDYNVPIDKATSTWTPVPKHIQNGSEEGILPAAVVSGAPMELQARTVRIYLPSKPATQSSNSRVLWRMDWDVLEKGHRWENELMGWQSSGDFVQGTHLTFRTKEEAIQFAEKQGYEYFVQEPNQRHFTPKAYANNFLYSPKKLKIVRTK.

A mitochondrion-targeting transit peptide spans 1 to 33 (MSALRITTASAARMLRTSNAMMPSVMGAAQRRA). The tract at residues 31 to 74 (RRALSDSAEPARVPSVESARVPEKLAKEDSPLATPKRNSPDYNV) is disordered. The segment covering 50 to 60 (RVPEKLAKEDS) has biased composition (basic and acidic residues).

The protein belongs to the complex I NDUFS4 subunit family. In terms of assembly, complex I is composed of about 40 different subunits. This is a component of the iron-sulfur (IP) fragment of the enzyme.

It localises to the mitochondrion inner membrane. In terms of biological role, accessory subunit of the mitochondrial membrane respiratory chain NADH dehydrogenase (Complex I), that is believed not to be involved in catalysis. Complex I functions in the transfer of electrons from NADH to the respiratory chain. The immediate electron acceptor for the enzyme is believed to be ubiquinone. This chain is NADH-ubiquinone oxidoreductase 21 kDa subunit, mitochondrial (nuo-21), found in Neurospora crassa (strain ATCC 24698 / 74-OR23-1A / CBS 708.71 / DSM 1257 / FGSC 987).